A 318-amino-acid polypeptide reads, in one-letter code: MDKKKGILLVALGTPRSCETEDVREYLKEFLGDPLVIQKPRWLWLPILNGIILKVRPQKSAEMYKQIWTDEGSPLMSYTIAQTEQLQGLREDFDVRFAMTYGEPRIDKVIREMKESGVEDITVLPLYPQYSLTTVEPIIQQVKKIDDKINVIRDFHQIESYTDLLAESIREKWQANHYDKLILSYHGIPLSYVTKKKDAYEAQCIETTRLVVEKLGLKEEEYEHTYQSKFGPEKWLEPATIDRIAELPKEDTKKVLICSPAFVADCLETLFELEIENKEVFVENGGETFDFVHPFNDSLEFTKVLSEVIEKNKVEVEV.

Residues histidine 186 and glutamate 268 each contribute to the Fe(2+) site.

It belongs to the ferrochelatase family.

Its subcellular location is the cytoplasm. The enzyme catalyses Fe-coproporphyrin III + 2 H(+) = coproporphyrin III + Fe(2+). It functions in the pathway porphyrin-containing compound metabolism; protoheme biosynthesis. Functionally, involved in coproporphyrin-dependent heme b biosynthesis. Catalyzes the insertion of ferrous iron into coproporphyrin III to form Fe-coproporphyrin III. The polypeptide is Coproporphyrin III ferrochelatase (Lactococcus lactis subsp. cremoris (strain SK11)).